The following is a 492-amino-acid chain: Transcription factor IIIB 60 kDa subunit (492 aa).

The segment at 1–30 (MGCPNCGSTTFESDTASGNTYCTQCGVVVE) adopts a TFIIB-type zinc-finger fold. Residues Cys-3, Cys-6, Cys-22, and Cys-25 each contribute to the Zn(2+) site. A disordered region spans residues 440 to 468 (QPRKRRRYRPRDSTSDGIADTAAESAKEM).

Belongs to the TFIIB family. As to quaternary structure, TFIIIB comprises the TATA-binding protein (TBP), the B-related factor (BRF) and a third subunit (Potential). Interacts with maf1.

Its subcellular location is the nucleus. In terms of biological role, general activator of RNA polymerase III transcription. The polypeptide is Transcription factor IIIB 60 kDa subunit (brf1) (Schizosaccharomyces pombe (strain 972 / ATCC 24843) (Fission yeast)).